We begin with the raw amino-acid sequence, 85 residues long: Large ribosomal subunit protein bL27 (85 aa).

Residues 1–21 (MAHKKGGGSTKNGRDSNPKYL) form a disordered region.

It belongs to the bacterial ribosomal protein bL27 family.

This chain is Large ribosomal subunit protein bL27, found in Chlorobium chlorochromatii (strain CaD3).